A 67-amino-acid chain; its full sequence is Prokaryotic ubiquitin-like protein Pup (67 aa).

Residues 1-11 (MAGQEQQQPQS) show a composition bias toward low complexity. The disordered stretch occupies residues 1 to 47 (MAGQEQQQPQSRESEFEDDAPATPPAPGEAQASAATQGVDDLLDEID). Positions 25–61 (PAPGEAQASAATQGVDDLLDEIDGVLESNAEEFVRAF) are ARC ATPase binding. Gln-67 bears the Deamidated glutamine mark. Gln-67 participates in a covalent cross-link: Isoglutamyl lysine isopeptide (Gln-Lys) (interchain with K-? in acceptor proteins).

Belongs to the prokaryotic ubiquitin-like protein family. In terms of assembly, strongly interacts with the proteasome-associated ATPase ARC through a hydrophobic interface; the interacting region of Pup lies in its C-terminal half. There is one Pup binding site per ARC hexamer ring. Post-translationally, is modified by deamidation of its C-terminal glutamine to glutamate by the deamidase Dop, a prerequisite to the subsequent pupylation process.

Its pathway is protein degradation; proteasomal Pup-dependent pathway. Functionally, protein modifier that is covalently attached to lysine residues of substrate proteins, thereby targeting them for proteasomal degradation. The tagging system is termed pupylation. The sequence is that of Prokaryotic ubiquitin-like protein Pup from Arthrobacter sp. (strain FB24).